We begin with the raw amino-acid sequence, 657 residues long: WD repeat-containing protein 70 (657 aa).

Disordered regions lie at residues 1–21 (MEHS…DPQL) and 43–172 (FEQT…PVQR). Basic and acidic residues predominate over residues 45 to 78 (QTRRTAVERSRKTLEAREKEEEMNREKELRKQIE). Low complexity predominate over residues 82 to 105 (PAPSSSSAARERSQSSCRDTSSSD). Composition is skewed to acidic residues over residues 106–119 (SESD…DDEL) and 150–168 (EEGE…EEDN). WD repeat units lie at residues 183-222 (HGTK…ASFK), 230-271 (CECH…ECIK), 284-324 (GHTA…KQKS), 333-372 (GKKV…HPKF), 379-418 (DPGT…KPLF), 424-469 (PTLF…RVYE), and 472-511 (ITDA…QRGA). Lys299 participates in a covalent cross-link: Glycyl lysine isopeptide (Lys-Gly) (interchain with G-Cter in SUMO2). At Lys455 the chain carries N6-acetyllysine. Residues 543–568 (REPRQRSTRKQLEKDRLDPLKSHKPE) show a composition bias toward basic and acidic residues. The disordered stretch occupies residues 543–584 (REPRQRSTRKQLEKDRLDPLKSHKPEPPVAGPGRGGRVGTHG). The span at 574–584 (PGRGGRVGTHG) shows a compositional bias: gly residues. Position 582 is a phosphothreonine (Thr582). Residues Lys593 and Lys599 each participate in a glycyl lysine isopeptide (Lys-Gly) (interchain with G-Cter in SUMO2) cross-link. Ser624 and Ser641 each carry phosphoserine. The disordered stretch occupies residues 634–657 (TMFAQVESDDEESKNEPEWKKRKI). Residues 647 to 657 (KNEPEWKKRKI) are compositionally biased toward basic and acidic residues.

The protein belongs to the WD repeat GAD-1 family.

This chain is WD repeat-containing protein 70 (Wdr70), found in Mus musculus (Mouse).